Here is a 347-residue protein sequence, read N- to C-terminus: Phenylalanine--tRNA ligase alpha subunit (347 aa).

Glutamate 261 contributes to the Mg(2+) binding site.

The protein belongs to the class-II aminoacyl-tRNA synthetase family. Phe-tRNA synthetase alpha subunit type 1 subfamily. As to quaternary structure, tetramer of two alpha and two beta subunits. The cofactor is Mg(2+).

The protein localises to the cytoplasm. It catalyses the reaction tRNA(Phe) + L-phenylalanine + ATP = L-phenylalanyl-tRNA(Phe) + AMP + diphosphate + H(+). This chain is Phenylalanine--tRNA ligase alpha subunit, found in Streptococcus thermophilus (strain ATCC BAA-491 / LMD-9).